The primary structure comprises 263 residues: uncharacterized protein (263 aa).

Residues 44–131 enclose the GST N-terminal domain; that stretch reads QVYSLGTPNG…YLADKFNHLI (88 aa). The GST C-terminal domain maps to 134–263; sequence DWAQRTEVLN…ALEVDYKAIK (130 aa).

This sequence belongs to the GST superfamily. Homodimer.

This is an uncharacterized protein from Streptococcus mutans serotype c (strain ATCC 700610 / UA159).